The following is a 431-amino-acid chain: Histidine--tRNA ligase (431 aa).

Belongs to the class-II aminoacyl-tRNA synthetase family. Homodimer.

The protein resides in the cytoplasm. It carries out the reaction tRNA(His) + L-histidine + ATP = L-histidyl-tRNA(His) + AMP + diphosphate + H(+). This chain is Histidine--tRNA ligase, found in Neisseria gonorrhoeae (strain ATCC 700825 / FA 1090).